The following is a 318-amino-acid chain: L-malyl-CoA/beta-methylmalyl-CoA lyase (318 aa).

Residues Phe19, Arg24, Lys30, and Arg76 each coordinate substrate. Residues Glu141 and Asp168 each contribute to the Mg(2+) site. Substrate-binding positions include 167-168 (AD) and 251-252 (IH).

Belongs to the HpcH/HpaI aldolase family. Homohexamer. Dimer of trimers. Mg(2+) is required as a cofactor. It depends on Mn(2+) as a cofactor.

It catalyses the reaction (S)-malyl-CoA = glyoxylate + acetyl-CoA. The enzyme catalyses (2R,3S)-beta-methylmalyl-CoA = propanoyl-CoA + glyoxylate. In vitro inhibited by EDTA. Involved in the ethylmalonyl-CoA pathway for acetate assimilation. Catalyzes the reversible condensation of glyoxylate and acetyl-CoA to L-malyl-CoA and the reversible condensation of glyoxylate and propionyl-CoA to beta-methylmalyl-CoA. The protein is L-malyl-CoA/beta-methylmalyl-CoA lyase of Rhodobacter capsulatus (Rhodopseudomonas capsulata).